Here is an 858-residue protein sequence, read N- to C-terminus: MVNFTVDQIRAIMDKKANIRNMSVIAHVDHGKSTLTDSLVCKAGIIASARAGETRFTDTRKDEQERCITIKSTAISLFYELSENDLNFIKQSKDGSGFLINLIDSPGHVDFSSEVTAALRVTDGALVVVDCVSGVCVQTETVLRQAIAERIKPVLMMNKMDRALLELQLEPEELYQTFQRIVENVNVIISTYGEGESGPMGNIMIDPVLGTVGFGSGLHGWAFTLKQFAEMYVAKFAAKGEGQLSAAERAKKVEDMMKKLWGDRYFDPANGKFSKSANSPDGKKLPRTFCQLILDPIFKVFDAIMNFRKEETAKLIEKLDIKLDSEDKDKEGKPLLKAVMRRWLPAGDALLQMITIHLPSPVTAQKYRCELLYEGPPDDEAAMGIKSCDPKGPLMMYISKMVPTSDKGRFYAFGRVFSGVVSTGLKVRIMGPNYTPGKKEDLYLKPIQRTILMMGRYVEPIEDVPCGNIVGLVGVDQFLVKTGTITTFEHAHNMRVMKFSVSPVVRVAVEAKNPADLPKLVEGLKRLAKSDPMVQCIIEESGEHIIAGAGELHLEICLKDLEEDHACIPIKKSDPVVSYRETVSEESNVLCLSKSPNKHNRLYMKARPFPDGLAEDIDKGEVSARQELKARARYLAEKYEWDVAEARKIWCFGPDGTGPNILTDITKGVQYLNEIKDSVVAGFQWATKEGALCEENMRGVRFDVHDVTLHADAIHRGGGQIIPTARRCLYASVLTAQPRLMEPIYLVEIQCPEQVVGGIYGVLNRKRGHVFEESQVAGTPMFVVKAYLPVNESFGFTADLRSNTGGQAFPQCVFDHWQILPGDPFDNSSRPSQVVAETRKRKGLKEGIPALDNFLDKL.

Residues A17 to V362 enclose the tr-type G domain. A26–S33 lines the GTP pocket. T54 is modified (phosphothreonine). T57 carries the phosphothreonine; by EEF2K modification. T59 carries the post-translational modification Phosphothreonine. K152 is modified (N6-succinyllysine). GTP is bound by residues N158–D161 and S216–L218. An N6-acetyllysine modification is found at K235. K239 is subject to N6-acetyllysine; alternate. K239 participates in a covalent cross-link: Glycyl lysine isopeptide (Lys-Gly) (interchain with G-Cter in SUMO1); alternate. Position 265 is a phosphotyrosine; by CSK (Y265). Position 272 is an N6-acetyllysine; alternate (K272). Residue K272 is modified to N6-succinyllysine; alternate. K275 carries the N6-acetyllysine modification. A Glycyl lysine isopeptide (Lys-Gly) (interchain with G-Cter in SUMO) cross-link involves residue K322. Residue S325 is modified to Phosphoserine. Y373 bears the Phosphotyrosine; by CSK mark. T435 carries the phosphothreonine modification. An N6-acetyllysine mark is found at K439 and K445. Residue S502 is modified to Phosphoserine. N6,N6,N6-trimethyllysine; by EEF2KMT is present on K525. Residue K529 forms a Glycyl lysine isopeptide (Lys-Gly) (interchain with G-Cter in SUMO) linkage. K572 carries the N6-succinyllysine modification. S595 is subject to Phosphoserine; by CDK2. K619 carries the N6-acetyllysine modification. H715 carries the post-translational modification Diphthamide.

It belongs to the TRAFAC class translation factor GTPase superfamily. Classic translation factor GTPase family. EF-G/EF-2 subfamily. In terms of assembly, binds to 80S ribosomes. Actively translating ribosomes show mutually exclusive binding of eIF5a (EIF5A or EIF5A2) and EEF2/eEF2. Interacts with SERBP1; interaction sequesters EEF2/eEF2 at the A-site of the ribosome, thereby blocking the interaction sites of the mRNA-tRNA complex, promoting ribosome stabilization and hibernation. Interacts with HABP4; interaction takes place at the A-site of hibernating ribosomes and promotes ribosome stabilization. Component of the mRNA surveillance SURF complex, at least composed of ERF1, ERF3 (ERF3A or ERF3B), EEF2, UPF1/RENT1, SMG1, SMG8 and SMG9. Interacts with RBPMS2. Phosphorylation by EF-2 kinase completely inactivates EF-2; it requires prior phosphorylation by CDK2 at Ser-595 during mitotic prometaphase. Phosphorylation by CSK promotes SUMOylation, proteolytic cleavage, and nuclear translocation if the C-terminal fragment. Post-translationally, diphthamide is 2-[3-carboxyamido-3-(trimethyl-ammonio)propyl]histidine. In terms of processing, ISGylated. Proteolytically processed at two sites following phosphorylation by CSK. Post-translationally, SUMOylated following phosphorylation by CSK, promotes proteolytic cleavage.

It localises to the cytoplasm. Its subcellular location is the nucleus. It catalyses the reaction GTP + H2O = GDP + phosphate + H(+). Catalyzes the GTP-dependent ribosomal translocation step during translation elongation. During this step, the ribosome changes from the pre-translocational (PRE) to the post-translocational (POST) state as the newly formed A-site-bound peptidyl-tRNA and P-site-bound deacylated tRNA move to the P and E sites, respectively. Catalyzes the coordinated movement of the two tRNA molecules, the mRNA and conformational changes in the ribosome. In Mus musculus (Mouse), this protein is Elongation factor 2 (Eef2).